The chain runs to 219 residues: Histone H1.4 (219 aa).

Positions methionine 1–alanine 15 are enriched in low complexity. Positions methionine 1–serine 41 are disordered. Serine 2 bears the N-acetylserine mark. Serine 2 is modified (phosphoserine). At lysine 17 the chain carries N6-acetyllysine. Phosphothreonine is present on threonine 18. Over residues valine 20 to alanine 35 the composition is skewed to basic residues. N6-acetyllysine; alternate is present on lysine 26. Residue lysine 26 is modified to N6-methyllysine; alternate. Lysine 34 bears the N6-(beta-hydroxybutyryl)lysine; alternate mark. N6-succinyllysine; alternate is present on lysine 34. Serine 36 is subject to Phosphoserine. Positions serine 36–lysine 109 constitute an H15 domain. Position 52 is an N6-(beta-hydroxybutyryl)lysine (lysine 52). A Citrulline modification is found at arginine 54. N6-(beta-hydroxybutyryl)lysine occurs at positions 64, 85, 90, and 106. A disordered region spans residues glycine 91–lysine 219. Positions lysine 119 to lysine 140 are enriched in basic residues. Threonine 146 bears the Phosphothreonine mark. Composition is skewed to basic residues over residues lysine 149–lysine 160 and lysine 168–proline 185. Serine 187 carries the post-translational modification Phosphoserine. A compositionally biased stretch (basic residues) spans lysine 192–lysine 219.

Belongs to the histone H1/H5 family. Post-translationally, H1 histones are progressively phosphorylated during the cell cycle, becoming maximally phosphorylated during late G2 phase and M phase, and being dephosphorylated sharply thereafter. Acetylated at Lys-26. Deacetylated at Lys-26 by SIRT1. In terms of processing, citrullination at Arg-54 (H1R54ci) by PADI4 takes place within the DNA-binding site of H1 and results in its displacement from chromatin and global chromatin decondensation, thereby promoting pluripotency and stem cell maintenance.

The protein localises to the nucleus. It localises to the chromosome. Functionally, histone H1 protein binds to linker DNA between nucleosomes forming the macromolecular structure known as the chromatin fiber. Histones H1 are necessary for the condensation of nucleosome chains into higher-order structured fibers. Also acts as a regulator of individual gene transcription through chromatin remodeling, nucleosome spacing and DNA methylation. The protein is Histone H1.4 of Oryctolagus cuniculus (Rabbit).